A 73-amino-acid polypeptide reads, in one-letter code: MATYCLSPLMHLDHFFNKILLMTTTTTTHRKKYINFQEQKLKKQESIGQSQPDVQEQLQHQQLQHHQKLYKIN.

This is an uncharacterized protein from Dictyostelium discoideum (Social amoeba).